The primary structure comprises 391 residues: uncharacterized protein (391 aa).

The OBG-type G domain occupies 85 to 314 (ATAAFVGFPS…LKEKIYEKLG (230 aa)). GTP contacts are provided by residues 91-98 (GFPSVGKS), 137-141 (DAPGI), and 267-270 (NKID). Residues 314 to 389 (GFIKIYLKPQ…EDGDILTIVI (76 aa)) enclose the TGS domain.

Belongs to the TRAFAC class OBG-HflX-like GTPase superfamily. OBG GTPase family.

This is an uncharacterized protein from Methanocaldococcus jannaschii (strain ATCC 43067 / DSM 2661 / JAL-1 / JCM 10045 / NBRC 100440) (Methanococcus jannaschii).